A 269-amino-acid polypeptide reads, in one-letter code: Replication protein A 32 kDa subunit (269 aa).

The span at 1-22 (MSNRVQGGFDNNSGNNQSAQKQ) shows a compositional bias: polar residues. The tract at residues 1 to 25 (MSNRVQGGFDNNSGNNQSAQKQQAE) is disordered. The segment at residues 69–149 (ITAKFEFLQS…AQIQLLYFSI (81 aa)) is a DNA-binding region (OB).

The protein belongs to the replication factor A protein 2 family. Component of the replication protein A complex (RPA), a heterotrimeric complex composed of RPA1, RPA2/TEB2 and RPA3/TEB3. Component of the telomerase holoenzyme complex, composed of the catalytic core (the catalytic subunit TERT, the telomerase RNA template component TER and TAP65/p65), which is associated with two heterotrimeric subcomplexes: (i) the replication protein A (RPA)-related subcomplex, composed of TEB1, RPA2/TEB2 and RPA3/TEB3 and (ii) the CST-like subcomplex, composed of TAP75/p75, TAP45/p45 and TAP19/p19. TEB1 and the CST-like subcomplex are tethered to the catalytic core by TAP50/p50.

It is found in the nucleus. The protein resides in the chromosome. The protein localises to the telomere. Its function is as follows. Component of the heterotrimeric replication protein A (RPA) and holoenzyme telomerase ribonucleoprotein complexes. As part of the RPA complex, binds and stabilizes single-stranded DNA (ssDNA) intermediates, that form during DNA replication or upon DNA stress. It prevents their reannealing and in parallel, recruits and activates different proteins and complexes involved in DNA metabolism. Thereby, it plays an essential role both in DNA replication and the cellular response to DNA damage. In the cellular response to DNA damage, the RPA complex controls DNA repair and DNA damage checkpoint activation. Also part of a subcomplex of the holoenzyme telomerase ribonucleoprotein complex: this subcomplex that contains TEB1, RPA2/TEB2, RPA3/TEB3, but not RPA1, mediates the recruitment of telomerase to telomeric DNA via specific interaction between TEB1 and telomeric ssDNA. In the holoenzyme telomerase ribonucleoprotein complex, RPA2/TEB2 and RPA3/TEB3 act as assembly factors for TEB1 incorporation into telomerase holoenzyme. In the holoenzyme telomerase ribonucleoprotein complex, RPA2/TEB2 does not contribute to ssDNA affinity, while it contributes to ssDNA affinity in the RPA complex. The polypeptide is Replication protein A 32 kDa subunit (RPA2) (Tetrahymena thermophila (strain SB210)).